The chain runs to 134 residues: Profilin (134 aa).

It belongs to the profilin family. As to quaternary structure, occurs in many kinds of cells as a complex with monomeric actin in a 1:1 ratio.

The protein resides in the cytoplasm. It is found in the cytoskeleton. Binds to actin and affects the structure of the cytoskeleton. At high concentrations, profilin prevents the polymerization of actin, whereas it enhances it at low concentrations. By binding to PIP2, it inhibits the formation of IP3 and DG. In Brassica napus (Rape), this protein is Profilin.